Consider the following 180-residue polypeptide: Large ribosomal subunit protein uL6 (180 aa).

It belongs to the universal ribosomal protein uL6 family. In terms of assembly, part of the 50S ribosomal subunit.

Functionally, this protein binds to the 23S rRNA, and is important in its secondary structure. It is located near the subunit interface in the base of the L7/L12 stalk, and near the tRNA binding site of the peptidyltransferase center. The protein is Large ribosomal subunit protein uL6 of Clostridium botulinum (strain Okra / Type B1).